A 2726-amino-acid chain; its full sequence is Filamin-C (2726 aa).

The segment at M1 to K260 is actin-binding. S5 is subject to Phosphoserine. 2 consecutive Calponin-homology (CH) domains span residues K37–S143 and Q160–L263. Filamin repeat units lie at residues S271–V369, M371–V469, A470–V566, S567–I659, P663–V759, G760–V862, D863–V961, A962–G1057, V1058–I1150, Q1151–V1245, Q1246–V1345, T1346–V1438, K1439–V1534, L1535–A1631, and D1636–A1735. R1003 is subject to Omega-N-methylarginine. Phosphoserine occurs at positions 1162 and 1339. Residues C1736–R1759 are hinge 1. Filamin repeat units lie at residues P1760–V1855, D1856–I1947, T1948–V2034, and S2037–V2129. Phosphoserine is present on S2043. Residues G2163–G2244 form an intradomain insert; mediate targeting to Z lines region. The span at E2193 to E2210 shows a compositional bias: basic and acidic residues. The interval E2193 to V2214 is disordered. One copy of the Filamin 20; mediates interaction with XIRP1 repeat lies at T2212 to V2307. Phosphoserine occurs at positions 2234 and 2237. At T2239 the chain carries Phosphothreonine. The segment covering Q2241–G2260 has biased composition (polar residues). The tract at residues Q2241–K2261 is disordered. Filamin repeat units follow at residues L2310–V2402, S2404–V2497, and S2501–V2593. Positions S2404 to V2725 are interaction with INPPL1. Residues S2587, S2618, S2621, S2633, S2715, and S2719 each carry the phosphoserine modification. A hinge 2 region spans residues T2594–P2630. The tract at residues T2594–P2726 is self-association site, tail. One copy of the Filamin 24 repeat lies at K2631–V2725.

It belongs to the filamin family. Homodimer; the filamin repeat 24 and the second hinge domain are important for dimer formation. Interacts with FLNB, INPPL1, ITGB1A, KCND2, MYOT, MYOZ1 and MYOZ3. Interacts with sarcoglycans SGCD and SGCG. Interacts (via filament repeats 17-18, 20-21 and 24) with USP25 (isoform USP25m only). Interacts with FBLIM1. Interacts with XIRP1; this interaction is mediated by filamin 20 repeat. Interacts with KY. Interacts with IGFN1. Interacts with MICALL2. Interacts with ANK3. Interacts with MICALL2. Interacts with ANK3. Interacts with SYNPO2. Post-translationally, ubiquitinated by FBXL22, leading to proteasomal degradation.

The protein resides in the cytoplasm. The protein localises to the membrane. Its subcellular location is the cytoskeleton. It is found in the myofibril. It localises to the sarcomere. The protein resides in the z line. In terms of biological role, muscle-specific filamin, which plays a central role in sarcomere assembly and organization. Critical for normal myogenesis, it probably functions as a large actin-cross-linking protein with structural functions at the Z lines in muscle cells. May be involved in reorganizing the actin cytoskeleton in response to signaling events. This chain is Filamin-C (Flnc), found in Mus musculus (Mouse).